The sequence spans 134 residues: MPPKTRSGARRTGRRVVKKNVANGHAYIKSTFNNTIVSITDPKGAVISWASSGHVGFKGSRKSTPFAAQMAAESAARKAMDHGMKKVDVFVKGPGSGRETAIRSLSTAGLEVGTIADVTPQPHNGCRPPKRRRV.

Belongs to the universal ribosomal protein uS11 family. As to quaternary structure, part of the 30S ribosomal subunit. Interacts with proteins S7 and S18. Binds to IF-3.

In terms of biological role, located on the platform of the 30S subunit, it bridges several disparate RNA helices of the 16S rRNA. Forms part of the Shine-Dalgarno cleft in the 70S ribosome. This is Small ribosomal subunit protein uS11 from Corynebacterium jeikeium (strain K411).